Reading from the N-terminus, the 75-residue chain is uncharacterized protein (75 aa).

Residues 49–69 (VDIVAVATTLPFIVAVICIVF) traverse the membrane as a helical segment.

The protein localises to the host membrane. This is an uncharacterized protein from Saccharolobus islandicus (Sulfolobus islandicus).